A 3419-amino-acid polypeptide reads, in one-letter code: Utrophin (3419 aa).

Residues 1-246 are actin-binding; the sequence is MAKYGHLEAS…LPDKKSIIMY (246 aa). Residue tyrosine 4 is modified to Phosphotyrosine. Serine 10 is subject to Phosphoserine. Calponin-homology (CH) domains are found at residues 31–135 and 150–255; these read DVQK…LHWQ and TNSE…EVLP. The interaction with SYNM stretch occupies residues 268-905; the sequence is TLPRKYKKEC…YQQQLENELK (638 aa). A Phosphoserine modification is found at serine 295. Spectrin repeat units follow at residues 312-416, 421-525, 532-636, 690-795, 801-901, 910-1012, 1019-1121, 1128-1229, 1236-1333, 1335-1436, 1438-1540, 1547-1648, 1653-1747, 1748-1840, 1841-1958, 1969-2070, and 2077-2176; these read DSYQ…SRLH, ELQK…NRLQ, QELL…NQVT, KKFD…RKIQ, NAYF…QQLE, PAYL…RSLE, RDFK…SRLS, MNLK…HTLE, VELL…ISLE, QLQV…LFQK, ANFE…QDLE, RKLK…NTLL, QLEV…INSA, QMLI…KIKA, IPQR…SDRR, KQFH…PRLK, and SGYR…KTRT. Positions 1336–1761 are interaction with SYNM; sequence LQVLRETDHM…GQDPAGTVEA (426 aa). The residue at position 1998 (serine 1998) is a Phosphoserine. At serine 2201 the chain carries Phosphoserine. Spectrin repeat units lie at residues 2216–2319, 2336–2426, 2433–2542, 2549–2674, and 2681–2783; these read ADLD…QQLE, EELM…SALE, QTSR…AHLE, NRLL…KQVG, and RDLQ…KQLQ. Residues 2616-2640 form a disordered region; sequence DQPIEAPEEPRRNPQSKTELTPEER. Residues 2785 to 3152 form an interaction with SYNM region; the sequence is AHRDFGPSSQ…TVLEGDNLET (368 aa). Residues 2799 to 2832 form the WW domain; it reads TSVQLPWQRSISHNKVPYYINHQTQTTCWDHPKM. The ZZ-type; degenerate zinc-finger motif lies at 3052-3108; the sequence is KHQAKCNICKECPIVGFRYRSLKHFNYDVCQSCFFSGRTAKGHKLHYPMVEYCIPTT. 4 residues coordinate Zn(2+): cysteine 3057, cysteine 3060, cysteine 3081, and cysteine 3084. 2 disordered regions span residues 3277–3296 and 3344–3395; these read RRGL…YHTS and DSDS…TDLT. Serine 3284 is subject to Phosphoserine.

In terms of assembly, homodimer. Interacts with the syntrophins SNTA1; SNTB1 and SNTB2. Interacts with SYNM. Interacts (via its WWW and ZZ domains) with DAG1 (via the PPXY motif of betaDAG1); the interaction is inhibited by the tyrosine phosphorylation of the PPXY motif of DAG1. Interacts with DTNB. Interacts with PGM5.

The protein resides in the postsynaptic cell membrane. It is found in the cytoplasm. Its subcellular location is the cytoskeleton. Functionally, may play a role in anchoring the cytoskeleton to the plasma membrane. The protein is Utrophin of Rattus norvegicus (Rat).